The chain runs to 296 residues: Phosphatidylserine decarboxylase proenzyme (296 aa).

Residues Asp100, His157, and Ser263 each act as charge relay system; for autoendoproteolytic cleavage activity in the active site. Ser263 functions as the Schiff-base intermediate with substrate; via pyruvic acid; for decarboxylase activity in the catalytic mechanism. Residue Ser263 is modified to Pyruvic acid (Ser); by autocatalysis.

Belongs to the phosphatidylserine decarboxylase family. PSD-B subfamily. Prokaryotic type I sub-subfamily. In terms of assembly, heterodimer of a large membrane-associated beta subunit and a small pyruvoyl-containing alpha subunit. Pyruvate serves as cofactor. Is synthesized initially as an inactive proenzyme. Formation of the active enzyme involves a self-maturation process in which the active site pyruvoyl group is generated from an internal serine residue via an autocatalytic post-translational modification. Two non-identical subunits are generated from the proenzyme in this reaction, and the pyruvate is formed at the N-terminus of the alpha chain, which is derived from the carboxyl end of the proenzyme. The autoendoproteolytic cleavage occurs by a canonical serine protease mechanism, in which the side chain hydroxyl group of the serine supplies its oxygen atom to form the C-terminus of the beta chain, while the remainder of the serine residue undergoes an oxidative deamination to produce ammonia and the pyruvoyl prosthetic group on the alpha chain. During this reaction, the Ser that is part of the protease active site of the proenzyme becomes the pyruvoyl prosthetic group, which constitutes an essential element of the active site of the mature decarboxylase.

It localises to the cell membrane. It catalyses the reaction a 1,2-diacyl-sn-glycero-3-phospho-L-serine + H(+) = a 1,2-diacyl-sn-glycero-3-phosphoethanolamine + CO2. It functions in the pathway phospholipid metabolism; phosphatidylethanolamine biosynthesis; phosphatidylethanolamine from CDP-diacylglycerol: step 2/2. Catalyzes the formation of phosphatidylethanolamine (PtdEtn) from phosphatidylserine (PtdSer). The protein is Phosphatidylserine decarboxylase proenzyme of Actinobacillus pleuropneumoniae serotype 7 (strain AP76).